The following is a 360-amino-acid chain: MTEFSSKERYTMIRVLVIDDSATMRILLKKLIDKNEHMECVGVAPNPVAAQELLRETRPDVITLDIEMPKMNGLDFLDRIMRLMPVAVIMISTLTEAGSESALRALELGAIDFIAKPKLDFAEGVQAYAEEIYRKIETAGRAKVKKLTRDVPPVRMDAEPPAKPLLAEAGKDGRVVAVGASTGGTEAVKELLLSLPADCPPLLIAQHMPEPFMRSLAKRLDLLCAMRVKMAEDGETLRRGCVYIAPGHSNLTIDATAAGYVCRIVRNAGEAQSDSSVDELFRSVAAAAGARGVGIVLTGSGSDGAAGARAMMAAGAFNIAQDAETSVVYSMPDAAIAACGINEVLPLEKIAGKLMELDGA.

One can recognise a Response regulatory domain in the interval 14-131 (RVLVIDDSAT…AEGVQAYAEE (118 aa)). 4-aspartylphosphate is present on D65. The 192-residue stretch at 169–360 (AGKDGRVVAV…AGKLMELDGA (192 aa)) folds into the CheB-type methylesterase domain. Residues S181, H207, and D303 contribute to the active site.

This sequence belongs to the CheB family. Phosphorylated by CheA. Phosphorylation of the N-terminal regulatory domain activates the methylesterase activity.

The protein localises to the cytoplasm. It catalyses the reaction [protein]-L-glutamate 5-O-methyl ester + H2O = L-glutamyl-[protein] + methanol + H(+). The catalysed reaction is L-glutaminyl-[protein] + H2O = L-glutamyl-[protein] + NH4(+). Functionally, involved in chemotaxis. Part of a chemotaxis signal transduction system that modulates chemotaxis in response to various stimuli. Catalyzes the demethylation of specific methylglutamate residues introduced into the chemoreceptors (methyl-accepting chemotaxis proteins or MCP) by CheR. Also mediates the irreversible deamidation of specific glutamine residues to glutamic acid. This is Protein-glutamate methylesterase/protein-glutamine glutaminase 3 from Burkholderia thailandensis (strain ATCC 700388 / DSM 13276 / CCUG 48851 / CIP 106301 / E264).